Reading from the N-terminus, the 495-residue chain is Putative myristoylated membrane protein 458R (495 aa).

The N-myristoyl glycine; by host moiety is linked to residue Gly2. N-linked (GlcNAc...) asparagine; by host glycans are attached at residues Asn58, Asn71, Asn72, Asn103, and Asn111. The stretch at 150–182 (HLKEIHKIITKEVENAKNNNKDVTKLIEQFSQA) forms a coiled coil. Helical transmembrane passes span 194–214 (ILSLIIFSTAFLGLGGVYVGG) and 216–236 (IAFPVTLLLSILAFYQYFNWT). N-linked (GlcNAc...) asparagine; by host glycosylation is found at Asn262, Asn314, Asn317, Asn349, and Asn457. A helical membrane pass occupies residues 469–489 (LWLLCVAVILLFIGIIGMGLG).

It belongs to the IIV-6 118L/458R family.

The protein localises to the membrane. This is Putative myristoylated membrane protein 458R from Acheta domesticus (House cricket).